The chain runs to 296 residues: Small ribosomal subunit protein uS2 (296 aa).

The segment at 246–272 (QAKDGSVVDSGKGKSIAAHKGGGKASK) is disordered.

Belongs to the universal ribosomal protein uS2 family.

The protein is Small ribosomal subunit protein uS2 of Anaplasma phagocytophilum (strain HZ).